The sequence spans 98 residues: Large ribosomal subunit protein uL23 (98 aa).

Belongs to the universal ribosomal protein uL23 family. In terms of assembly, part of the 50S ribosomal subunit. Contacts protein L29, and trigger factor when it is bound to the ribosome.

Functionally, one of the early assembly proteins it binds 23S rRNA. One of the proteins that surrounds the polypeptide exit tunnel on the outside of the ribosome. Forms the main docking site for trigger factor binding to the ribosome. This chain is Large ribosomal subunit protein uL23, found in Jannaschia sp. (strain CCS1).